A 140-amino-acid polypeptide reads, in one-letter code: Large ribosomal subunit protein uL11 (140 aa).

It belongs to the universal ribosomal protein uL11 family. Part of the ribosomal stalk of the 50S ribosomal subunit. Interacts with L10 and the large rRNA to form the base of the stalk. L10 forms an elongated spine to which L12 dimers bind in a sequential fashion forming a multimeric L10(L12)X complex. One or more lysine residues are methylated.

Functionally, forms part of the ribosomal stalk which helps the ribosome interact with GTP-bound translation factors. In Staphylococcus aureus (strain Mu3 / ATCC 700698), this protein is Large ribosomal subunit protein uL11.